We begin with the raw amino-acid sequence, 476 residues long: G-patch domain and KOW motifs-containing protein (476 aa).

The interval 1–96 (MADSKEGVLP…PGPSTDTGAL (96 aa)) is disordered. Residue alanine 2 is modified to N-acetylalanine. Lysine 5 is covalently cross-linked (Glycyl lysine isopeptide (Lys-Gly) (interchain with G-Cter in SUMO2)). Residues 13 to 26 (AASTAPISFGFTRT) are compositionally biased toward polar residues. A Phosphoserine; by PKA modification is found at serine 27. Serine 35 and serine 42 each carry phosphoserine. Over residues 43–58 (PEEKDFLKTVEGRELQ) the composition is skewed to basic and acidic residues. At serine 115 the chain carries Phosphoserine. The G-patch domain maps to 164 to 210 (VEAYGLAMLRGMGWKPGEGIGRTFNQVVKPRVNSLRPKGLGLGANLT). Residues 203–244 (LGLGANLTEAQALTPTGPSRMPRPDEEQEKDKEDQPQGLVPG) are disordered. A compositionally biased stretch (polar residues) spans 210–219 (TEAQALTPTG). The residue at position 216 (threonine 216) is a Phosphothreonine. Positions 224 to 237 (PRPDEEQEKDKEDQ) are enriched in basic and acidic residues. A KOW 1 domain is found at 240-267 (GLVPGGAVVVLSGPHRGLYGKVEGLDPD). Threonine 316 is modified (phosphothreonine; by PKA). The interval 327–353 (DNSERKRKHLPDRQDGPAAKSEKAAPR) is disordered. A compositionally biased stretch (basic and acidic residues) spans 337–351 (PDRQDGPAAKSEKAA). In terms of domain architecture, KOW 2 spans 415-442 (PKAEGDRVMVVLGPQTGRVGHLLSRDRA). A Phosphoserine modification is found at serine 471. Threonine 473 bears the Phosphothreonine mark.

The protein belongs to the MOS2 family. Component of the minor spliceosome, which splices U12-type introns. Interacts with PRKX. Interacts with DHX16. Interacts with PRKACB. In terms of processing, phosphorylation regulates its ability to bind RNA.

Its subcellular location is the nucleus. Its function is as follows. RNA-binding protein involved in pre-mRNA splicing. As a component of the minor spliceosome, involved in the splicing of U12-type introns in pre-mRNAs. The protein is G-patch domain and KOW motifs-containing protein (GPKOW) of Homo sapiens (Human).